Reading from the N-terminus, the 652-residue chain is tRNA 5-methylaminomethyl-2-thiouridine biosynthesis bifunctional protein MnmC (652 aa).

The interval 1–235 (MPDRLVPATL…EPALRVGEYA (235 aa)) is tRNA (mnm(5)s(2)U34)-methyltransferase. Residues 259–652 (IGAGLAGCAV…IRALRGRQIG (394 aa)) form an FAD-dependent cmnm(5)s(2)U34 oxidoreductase region.

The protein in the N-terminal section; belongs to the methyltransferase superfamily. tRNA (mnm(5)s(2)U34)-methyltransferase family. In the C-terminal section; belongs to the DAO family. FAD serves as cofactor.

Its subcellular location is the cytoplasm. The catalysed reaction is 5-aminomethyl-2-thiouridine(34) in tRNA + S-adenosyl-L-methionine = 5-methylaminomethyl-2-thiouridine(34) in tRNA + S-adenosyl-L-homocysteine + H(+). Its function is as follows. Catalyzes the last two steps in the biosynthesis of 5-methylaminomethyl-2-thiouridine (mnm(5)s(2)U) at the wobble position (U34) in tRNA. Catalyzes the FAD-dependent demodification of cmnm(5)s(2)U34 to nm(5)s(2)U34, followed by the transfer of a methyl group from S-adenosyl-L-methionine to nm(5)s(2)U34, to form mnm(5)s(2)U34. The sequence is that of tRNA 5-methylaminomethyl-2-thiouridine biosynthesis bifunctional protein MnmC from Burkholderia ambifaria (strain MC40-6).